The chain runs to 436 residues: GTPase Der (436 aa).

2 EngA-type G domains span residues 4 to 167 (PIVA…KEEE) and 176 to 351 (IRLS…ENHK). Residues 10 to 17 (GRPNVGKS), 57 to 61 (DTGGI), 119 to 122 (NKVD), 182 to 189 (GRPNVGKS), 229 to 233 (DTAGM), and 294 to 297 (NKWD) contribute to the GTP site. The 85-residue stretch at 352–436 (KRVQSSTLNE…PVHIIARKRN (85 aa)) folds into the KH-like domain.

Belongs to the TRAFAC class TrmE-Era-EngA-EngB-Septin-like GTPase superfamily. EngA (Der) GTPase family. As to quaternary structure, associates with the 50S ribosomal subunit.

Functionally, GTPase that plays an essential role in the late steps of ribosome biogenesis. The polypeptide is GTPase Der (Staphylococcus saprophyticus subsp. saprophyticus (strain ATCC 15305 / DSM 20229 / NCIMB 8711 / NCTC 7292 / S-41)).